Consider the following 1163-residue polypeptide: Hamartin (1163 aa).

Lys30 participates in a covalent cross-link: Glycyl lysine isopeptide (Lys-Gly) (interchain with G-Cter in ubiquitin). Residues 295 to 316 are compositionally biased toward polar residues; sequence SSYVDTQNSYGGATSTPSSTSR. Disordered stretches follow at residues 295-337 and 353-594; these read SSYV…STRP and CGMT…QRGV. Positions 321–337 are enriched in low complexity; that stretch reads STPGQLPQSLSSLSTRP. Residues 393 to 402 show a composition bias toward pro residues; that stretch reads TSPPPAPPCP. The mediates interaction with WDR45B stretch occupies residues 403 to 787; it reads QDDCAHGPAS…QIRQLQHDRE (385 aa). Positions 474–487 are enriched in basic and acidic residues; sequence EKDKEEAAISKELS. Ser487, Ser505, Ser511, Ser521, Ser595, and Ser598 each carry phosphoserine. Residues 512-530 are compositionally biased toward polar residues; it reads LSGSQRKTHSAASGTQGFS. Coiled-coil stretches lie at residues 721–919 and 970–994; these read RKVI…LAKK and EKDG…ERLD. The segment covering 1008 to 1020 has biased composition (basic and acidic residues); the sequence is NEEAAGHNGETRT. The interval 1008-1163 is disordered; the sequence is NEEAAGHNGE…DYNETHHEHS (156 aa). A compositionally biased stretch (low complexity) spans 1029-1046; that stretch reads SCGGRVTGGSSSSSSELS. The segment covering 1066 to 1083 has biased composition (polar residues); it reads EPSSSIPTTVGSLPSSKS. Residues 1088–1099 are compositionally biased toward basic and acidic residues; sequence KTRELFRNKSES. Ser1097 carries the post-translational modification Phosphoserine. The segment covering 1131-1146 has biased composition (low complexity); it reads PPSLDAPHPSSPSSDS. Over residues 1154 to 1163 the composition is skewed to basic and acidic residues; sequence DYNETHHEHS.

In terms of assembly, component of the TSC-TBC complex (also named Rhebulator complex), composed of 2 molecules of TSC1, 2 molecules of TSC2 and 1 molecule of TBC1D7. Probably forms a complex composed of chaperones HSP90 and HSP70, co-chaperones STIP1/HOP, CDC37, PPP5C, PTGES3/p23, TSC1 and client protein TSC2. Forms a complex composed of chaperones HSP90 and HSP70, co-chaperones CDC37, PPP5C, TSC1 and client protein TSC2, CDK4, AKT, RAF1 and NR3C1; this complex does not contain co-chaperones STIP1/HOP and PTGES3/p23. Forms a complex containing HSP90AA1, TSC1 and TSC2; TSC1 is required to recruit TCS2 to the complex. Interacts (via C-terminus) with the closed form of HSP90AA1 (via the middle domain and TPR repeat-binding motif). Interacts with DOCK7. Interacts with FBXW5. Interacts with WDR45B. Interacts with RPAP3 and URI1. Post-translationally, phosphorylation at Ser-505 does not affect interaction with TSC2. 'Lys-63'-linked ubiquitinated at Lys-30 by PELI1; the ubiquitination promotes TSC1/TSC2 complex stability. As to expression, highly expressed in brain, spleen and kidney, followed by liver and heart.

The protein resides in the lysosome membrane. It is found in the cytoplasm. Its subcellular location is the cytosol. Its function is as follows. Non-catalytic component of the TSC-TBC complex, a multiprotein complex that acts as a negative regulator of the canonical mTORC1 complex, an evolutionarily conserved central nutrient sensor that stimulates anabolic reactions and macromolecule biosynthesis to promote cellular biomass generation and growth. The TSC-TBC complex acts as a GTPase-activating protein (GAP) for the small GTPase RHEB, a direct activator of the protein kinase activity of mTORC1. In absence of nutrients, the TSC-TBC complex inhibits mTORC1, thereby preventing phosphorylation of ribosomal protein S6 kinase (RPS6KB1 and RPS6KB2) and EIF4EBP1 (4E-BP1) by the mTORC1 signaling. The TSC-TBC complex is inactivated in response to nutrients, relieving inhibition of mTORC1. Within the TSC-TBC complex, TSC1 stabilizes TSC2 and prevents TSC2 self-aggregation. Involved in microtubule-mediated protein transport via its ability to regulate mTORC1 signaling. Also acts as a co-chaperone for HSP90AA1 facilitating HSP90AA1 chaperoning of protein clients such as kinases, TSC2 and glucocorticoid receptor NR3C1. Increases ATP binding to HSP90AA1 and inhibits HSP90AA1 ATPase activity. Competes with the activating co-chaperone AHSA1 for binding to HSP90AA1, thereby providing a reciprocal regulatory mechanism for chaperoning of client proteins. Recruits TSC2 to HSP90AA1 and stabilizes TSC2 by preventing the interaction between TSC2 and ubiquitin ligase HERC1. In Rattus norvegicus (Rat), this protein is Hamartin.